A 158-amino-acid polypeptide reads, in one-letter code: Transcription elongation factor GreA (158 aa).

Residues 47–68 (AEYDAAKEAQGLLELKIKKMEE) are a coiled coil.

The protein belongs to the GreA/GreB family.

Its function is as follows. Necessary for efficient RNA polymerase transcription elongation past template-encoded arresting sites. The arresting sites in DNA have the property of trapping a certain fraction of elongating RNA polymerases that pass through, resulting in locked ternary complexes. Cleavage of the nascent transcript by cleavage factors such as GreA or GreB allows the resumption of elongation from the new 3'terminus. GreA releases sequences of 2 to 3 nucleotides. The polypeptide is Transcription elongation factor GreA (Flavobacterium psychrophilum (strain ATCC 49511 / DSM 21280 / CIP 103535 / JIP02/86)).